The sequence spans 165 residues: Nicotine 6-hydroxylase small subunit (165 aa).

The 2Fe-2S ferredoxin-type domain maps to Val-10 to Leu-86. Residues Cys-48, Cys-53, Cys-56, and Cys-68 each contribute to the [2Fe-2S] cluster site.

As to quaternary structure, heterotrimer composed of a large subunit (NdhL), a medium subunit (NdhM) and a small subunit (NdhS). Requires [2Fe-2S] cluster as cofactor.

The protein localises to the cytoplasm. The catalysed reaction is (R)-nicotine + A + H2O = (R)-6-hydroxynicotine + AH2. It carries out the reaction (S)-nicotine + A + H2O = (S)-6-hydroxynicotine + AH2. It functions in the pathway alkaloid degradation; nicotine degradation; 6-hydroxypseudooxynicotine from nicotine (R-isomer route): step 1/2. Its pathway is alkaloid degradation; nicotine degradation; 6-hydroxypseudooxynicotine from nicotine (S-isomer route): step 1/2. With respect to regulation, nicotine dehydrogenase activity is inhibited by tungsten. Its function is as follows. Component of the nicotine 6-hydroxylase, which is involved in the degradation of nicotine. Catalyzes the hydroxylation of the pyridine ring at C6 to form 6-hydroxynicotine. Can use both L-nicotine and D-nicotine. The chain is Nicotine 6-hydroxylase small subunit from Paenarthrobacter nicotinovorans (Arthrobacter nicotinovorans).